Consider the following 281-residue polypeptide: CCAAT/enhancer-binding protein epsilon (281 aa).

Positions 1-30 are disordered; sequence MSHGTYYECEPRAGQQPLEFSGARAGPGEL. Lys-121 participates in a covalent cross-link: Glycyl lysine isopeptide (Lys-Gly) (interchain with G-Cter in SUMO2). Ser-181 is subject to Phosphoserine. The region spanning 204-267 is the bZIP domain; it reads SLEYRLRRER…DTLRNLFRQI (64 aa). The tract at residues 208–228 is basic motif; the sequence is RLRRERNNIAVRKSRDKAKRR. The interval 230–237 is leucine-zipper; sequence LETQQKVL.

It belongs to the bZIP family. C/EBP subfamily. As to quaternary structure, binds DNA as a homodimer and as a heterodimer. Can form stable heterodimers with CEBPA, CEBPB and CEBPD. Interacts with GATA1 and SPI1. Interacts with SMARCD2. Post-translationally, phosphorylated.

It is found in the nucleus. Transcriptional activator. C/EBP are DNA-binding proteins that recognize two different motifs: the CCAAT homology common to many promoters and the enhanced core homology common to many enhancers. Required for the promyelocyte-myelocyte transition in myeloid differentiation. The polypeptide is CCAAT/enhancer-binding protein epsilon (CEBPE) (Ovis aries (Sheep)).